Here is a 602-residue protein sequence, read N- to C-terminus: General amino-acid permease GAP1 (602 aa).

At 1–95 (MSNTSSYEKN…LKHHLKNRHL (95 aa)) the chain is on the cytoplasmic side. A Glycyl lysine isopeptide (Lys-Gly) (interchain with G-Cter in ubiquitin) cross-link involves residue K76. Residues 96–116 (QMIAIGGAIGTGLLVGSGTAL) traverse the membrane as a helical segment. At 117 to 121 (RTGGP) the chain is on the extracellular side. A helical membrane pass occupies residues 122–142 (ASLLIGWGSTGTMIYAMVMAL). The Cytoplasmic portion of the chain corresponds to 143–165 (GELAVIFPISGGFTTYATRFIDE). Residues 166 to 185 (SFGYANNFNYMLQWLVVLPL) form a helical membrane-spanning segment. Residues 186–204 (EIVSASITVNFWGTDPKYR) lie on the Extracellular side of the membrane. The helical transmembrane segment at 205 to 224 (DGFVALFWLAIVIINMFGVK) threads the bilayer. Topologically, residues 225-237 (GYGEAEFVFSFIK) are cytoplasmic. The helical transmembrane segment at 238–256 (VITVVGFIILGIILNCGGG) threads the bilayer. At 257–280 (PTGGYIGGKYWHDPGAFAGDTPGA) the chain is on the extracellular side. The helical transmembrane segment at 281–298 (KFKGVCSVFVTAAFSFAG) threads the bilayer. Over 299–321 (SELVGLAASESVEPRKSVPKAAK) the chain is Cytoplasmic. A helical membrane pass occupies residues 322–342 (QVFWRITLFYILSLLMIGLLV). Residues 343–376 (PYNDKSLIGASSVDAAASPFVIAIKTHGIKGLPS) are Extracellular-facing. The chain crosses the membrane as a helical span at residues 377–396 (VVNVVILIAVLSVGNSAIYA). Residues 397–421 (CSRTMVALAEQRFLPEIFSYVDRKG) lie on the Cytoplasmic side of the membrane. The helical transmembrane segment at 422 to 442 (RPLVGIAVTSAFGLIAFVAAS) threads the bilayer. At 443-451 (KKEGEVFNW) the chain is on the extracellular side. A helical transmembrane segment spans residues 452-472 (LLALSGLSSLFTWGGICICHI). The Cytoplasmic portion of the chain corresponds to 473-491 (RFRKALAAQGRGLDELSFK). Residues 492–510 (SPTGVWGSYWGLFMVIIMF) form a helical membrane-spanning segment. Topologically, residues 511–529 (IAQFYVAVFPVGDSPSAEG) are extracellular. Residues 530 to 548 (FFEAYLSFPLVMVMYIGHK) traverse the membrane as a helical segment. Topologically, residues 549–602 (IYKRNWKLFIPAEKMDIDTGRREVDLDLLKQEIAEEKAIMATKPRWYRIWNFWC) are cytoplasmic.

The protein belongs to the amino acid-polyamine-organocation (APC) superfamily. YAT (TC 2.A.3.10) family. In terms of processing, active permease is phosphorylated. The addition of glutamine causes rapid dephosphorylation and inactivation of the permease. Ubiquitination by RSP5 and the RSP5-associated proteins BUL1 and BUL2, leads the addition of poly-ubiquitin chains being specifically formed by linkage through the lysine 63 residue of ubiquitin and mediates ammonium-induced endocytosis and degradation in the vacuole.

It localises to the cell membrane. The protein resides in the endoplasmic reticulum membrane. General amino-acid permease involved in the uptake of all the naturally occurring L-amino-acids, related compounds such as ornithine and citrulline, some D-amino acids, toxic amino acid analogs such as azetidine-2-carboxylate, and the polyamines putrescine and spermidine. Senses its transport substrates to set an appropriate level of transporter activity at the cell surface. Required for FLO11 expression and invasive growth. The chain is General amino-acid permease GAP1 from Saccharomyces cerevisiae (strain ATCC 204508 / S288c) (Baker's yeast).